The primary structure comprises 449 residues: PC-esterase domain-containing protein 1A (449 aa).

It belongs to the PC-esterase family.

In Mus musculus (Mouse), this protein is PC-esterase domain-containing protein 1A (Pced1a).